Here is a 248-residue protein sequence, read N- to C-terminus: Probable transcriptional regulatory protein BARBAKC583_0163 (248 aa).

Belongs to the TACO1 family.

The protein resides in the cytoplasm. The protein is Probable transcriptional regulatory protein BARBAKC583_0163 of Bartonella bacilliformis (strain ATCC 35685 / KC583 / Herrer 020/F12,63).